A 160-amino-acid polypeptide reads, in one-letter code: Allophycocyanin alpha chain (160 aa).

Asn70 is modified (N4-methylasparagine). Cys80 serves as a coordination point for (2R,3E)-phycocyanobilin.

The protein belongs to the phycobiliprotein family. As to quaternary structure, component of the phycobilisome. Heterodimer of an alpha and a beta chain. Contains one covalently linked phycocyanobilin chromophore.

The protein localises to the cellular thylakoid membrane. Light-harvesting photosynthetic bile pigment-protein from the phycobiliprotein complex. Allophycocyanin has a maximum absorption at approximately 650 nanometers. The sequence is that of Allophycocyanin alpha chain (apcA) from Anabaena cylindrica.